Here is a 274-residue protein sequence, read N- to C-terminus: MNKKLKVLLTNDDGIFAKGISLLVSNLLKADFADLYIVAPNTEQSGKSMSFSYTEPVSIERVDYHQPVAGAWAVSGSPVDCIKLALGDLFLDSLPDIVLSGINNGSNAGRNIFYSGTAGAAMEAVISGIPAIAFSQEEHISCFQEKKSCELIKMLVLYALSRPFPLLTGFNVNFPACENNEEWQGMKLVATGKEFAYGVPRLLCDDGKRKFYSLNDCQRLMDEDLSEECHSLLTKKITVAPLLVRNSPLGLMSEEEFQQLQQEFEDFIHSEIRS.

A divalent metal cation is bound by residues aspartate 12, aspartate 13, serine 45, and asparagine 103.

This sequence belongs to the SurE nucleotidase family. It depends on a divalent metal cation as a cofactor.

The protein resides in the cytoplasm. The enzyme catalyses a ribonucleoside 5'-phosphate + H2O = a ribonucleoside + phosphate. In terms of biological role, nucleotidase that shows phosphatase activity on nucleoside 5'-monophosphates. The chain is 5'-nucleotidase SurE from Chlamydia felis (strain Fe/C-56) (Chlamydophila felis).